The chain runs to 317 residues: Protein CbxX, plasmid (317 aa).

85–92 provides a ligand contact to ATP; that stretch reads GNPGTGKT.

The protein belongs to the CbxX/CfxQ family.

Its function is as follows. Seems to be necessary for the expression of RuBisCO. The polypeptide is Protein CbxX, plasmid (cbxXP) (Cupriavidus necator (strain ATCC 17699 / DSM 428 / KCTC 22496 / NCIMB 10442 / H16 / Stanier 337) (Ralstonia eutropha)).